Reading from the N-terminus, the 226-residue chain is Deoxyribose-phosphate aldolase (226 aa).

Residue Glu96 is the Proton donor/acceptor of the active site. Lys157 functions as the Schiff-base intermediate with acetaldehyde in the catalytic mechanism. Residue Lys185 is the Proton donor/acceptor of the active site.

It belongs to the DeoC/FbaB aldolase family. DeoC type 1 subfamily.

It localises to the cytoplasm. It carries out the reaction 2-deoxy-D-ribose 5-phosphate = D-glyceraldehyde 3-phosphate + acetaldehyde. Its pathway is carbohydrate degradation; 2-deoxy-D-ribose 1-phosphate degradation; D-glyceraldehyde 3-phosphate and acetaldehyde from 2-deoxy-alpha-D-ribose 1-phosphate: step 2/2. Catalyzes a reversible aldol reaction between acetaldehyde and D-glyceraldehyde 3-phosphate to generate 2-deoxy-D-ribose 5-phosphate. In Gloeobacter violaceus (strain ATCC 29082 / PCC 7421), this protein is Deoxyribose-phosphate aldolase.